Here is a 141-residue protein sequence, read N- to C-terminus: Hemoglobin subunit alpha-A (141 aa).

The 141-residue stretch at 1 to 141 (VLSAADKTNV…VGTVLTAKYR (141 aa)) folds into the Globin domain. Histidine 58 lines the O2 pocket. A heme b-binding site is contributed by histidine 87.

This sequence belongs to the globin family. As to quaternary structure, heterotetramer of two alpha chains and two beta chains. As to expression, red blood cells.

Involved in oxygen transport from the lung to the various peripheral tissues. This chain is Hemoglobin subunit alpha-A (HBAA), found in Turdus merula (Common blackbird).